The following is a 62-amino-acid chain: Photosystem II reaction center protein Z (62 aa).

2 helical membrane passes run 8 to 28 and 41 to 61; these read ALFA…VVLA and FSGI…NSFV.

It belongs to the PsbZ family. PSII is composed of 1 copy each of membrane proteins PsbA, PsbB, PsbC, PsbD, PsbE, PsbF, PsbH, PsbI, PsbJ, PsbK, PsbL, PsbM, PsbT, PsbY, PsbZ, Psb30/Ycf12, at least 3 peripheral proteins of the oxygen-evolving complex and a large number of cofactors. It forms dimeric complexes.

Its subcellular location is the plastid. It is found in the chloroplast thylakoid membrane. In terms of biological role, may control the interaction of photosystem II (PSII) cores with the light-harvesting antenna, regulates electron flow through the 2 photosystem reaction centers. PSII is a light-driven water plastoquinone oxidoreductase, using light energy to abstract electrons from H(2)O, generating a proton gradient subsequently used for ATP formation. This Chlorella vulgaris (Green alga) protein is Photosystem II reaction center protein Z.